We begin with the raw amino-acid sequence, 337 residues long: Ketol-acid reductoisomerase (NADP(+)) (337 aa).

One can recognise a KARI N-terminal Rossmann domain in the interval 3-183 (VEMFYDDDAD…GGARAGVIKT (181 aa)). Residues 26–29 (YGSQ), Lys-49, Ser-52, Ser-54, and 84–87 (DTAQ) contribute to the NADP(+) site. The active site involves His-109. Residue Gly-135 coordinates NADP(+). The 146-residue stretch at 184-329 (TFKEETETDL…KKLRDLMSWV (146 aa)) folds into the KARI C-terminal knotted domain. Residues Asp-192, Glu-196, Glu-228, and Glu-232 each coordinate Mg(2+). Ser-253 lines the substrate pocket.

The protein belongs to the ketol-acid reductoisomerase family. Mg(2+) is required as a cofactor.

It carries out the reaction (2R)-2,3-dihydroxy-3-methylbutanoate + NADP(+) = (2S)-2-acetolactate + NADPH + H(+). The enzyme catalyses (2R,3R)-2,3-dihydroxy-3-methylpentanoate + NADP(+) = (S)-2-ethyl-2-hydroxy-3-oxobutanoate + NADPH + H(+). The protein operates within amino-acid biosynthesis; L-isoleucine biosynthesis; L-isoleucine from 2-oxobutanoate: step 2/4. It participates in amino-acid biosynthesis; L-valine biosynthesis; L-valine from pyruvate: step 2/4. Functionally, involved in the biosynthesis of branched-chain amino acids (BCAA). Catalyzes an alkyl-migration followed by a ketol-acid reduction of (S)-2-acetolactate (S2AL) to yield (R)-2,3-dihydroxy-isovalerate. In the isomerase reaction, S2AL is rearranged via a Mg-dependent methyl migration to produce 3-hydroxy-3-methyl-2-ketobutyrate (HMKB). In the reductase reaction, this 2-ketoacid undergoes a metal-dependent reduction by NADPH to yield (R)-2,3-dihydroxy-isovalerate. In Mycobacterium sp. (strain JLS), this protein is Ketol-acid reductoisomerase (NADP(+)).